The following is a 353-amino-acid chain: Paraxanthine methyltransferase 2 (353 aa).

Tyr-18 lines the S-adenosyl-L-methionine pocket. Substrate contacts are provided by residues Tyr-18 and 21–25; that span reads QSSYQ. S-adenosyl-L-methionine contacts are provided by residues Gly-59, 59–60, Asn-65, 99–102, 128–130, and 145–147; these read GC, FNDL, SFF, and SYA. Residue 146–150 participates in substrate binding; it reads YAFLF. Residues Asn-167, Asp-252, and Phe-254 each contribute to the Mg(2+) site. The substrate site is built by Ser-301 and Tyr-306.

The protein belongs to the methyltransferase superfamily. SABATH family. As to quaternary structure, homodimer. Mg(2+) serves as cofactor.

This chain is Paraxanthine methyltransferase 2, found in Arabidopsis thaliana (Mouse-ear cress).